Here is a 74-residue protein sequence, read N- to C-terminus: Cecropin-P4 (74 aa).

The signal sequence occupies residues 1 to 13; that stretch reads MFLMYLLVQTTES. Residues 45 to 74 constitute a propeptide, removed in mature form; sequence HRRSVAHQEEASLHVKTDELPSPDTVREQL. The disordered stretch occupies residues 51-74; sequence HQEEASLHVKTDELPSPDTVREQL.

This sequence belongs to the cecropin family. In terms of tissue distribution, expressed in the body wall, intestine, uterus and ovary.

The protein resides in the secreted. Has antibacterial activity against several Gram-positive and Gram-negative bacteria. Is weakly active against yeasts. Acts by a nonpore mechanism. The polypeptide is Cecropin-P4 (ASCEC-4) (Ascaris suum (Pig roundworm)).